The sequence spans 158 residues: SsrA-binding protein (158 aa).

Residues 131 to 158 form a disordered region; the sequence is GKKTHDKRETEKKRDWNREKARLLRDRG. The span at 136-158 shows a compositional bias: basic and acidic residues; that stretch reads DKRETEKKRDWNREKARLLRDRG.

The protein belongs to the SmpB family.

The protein resides in the cytoplasm. In terms of biological role, required for rescue of stalled ribosomes mediated by trans-translation. Binds to transfer-messenger RNA (tmRNA), required for stable association of tmRNA with ribosomes. tmRNA and SmpB together mimic tRNA shape, replacing the anticodon stem-loop with SmpB. tmRNA is encoded by the ssrA gene; the 2 termini fold to resemble tRNA(Ala) and it encodes a 'tag peptide', a short internal open reading frame. During trans-translation Ala-aminoacylated tmRNA acts like a tRNA, entering the A-site of stalled ribosomes, displacing the stalled mRNA. The ribosome then switches to translate the ORF on the tmRNA; the nascent peptide is terminated with the 'tag peptide' encoded by the tmRNA and targeted for degradation. The ribosome is freed to recommence translation, which seems to be the essential function of trans-translation. This is SsrA-binding protein from Brucella abortus biovar 1 (strain 9-941).